We begin with the raw amino-acid sequence, 367 residues long: Protein-glutamate methylesterase/protein-glutamine glutaminase (367 aa).

One can recognise a Response regulatory domain in the interval 6-123; it reads RVLVVDDSAF…SLGIKQLADE (118 aa). Residue Asp57 is modified to 4-aspartylphosphate. The CheB-type methylesterase domain maps to 165–361; sequence ISKKEIVVVI…DILLKKVNEY (197 aa). Catalysis depends on residues Ser177, His204, and Asp303.

This sequence belongs to the CheB family. Phosphorylated by CheA. Phosphorylation of the N-terminal regulatory domain activates the methylesterase activity.

The protein resides in the cytoplasm. The catalysed reaction is [protein]-L-glutamate 5-O-methyl ester + H2O = L-glutamyl-[protein] + methanol + H(+). It catalyses the reaction L-glutaminyl-[protein] + H2O = L-glutamyl-[protein] + NH4(+). In terms of biological role, involved in chemotaxis. Part of a chemotaxis signal transduction system that modulates chemotaxis in response to various stimuli. Catalyzes the demethylation of specific methylglutamate residues introduced into the chemoreceptors (methyl-accepting chemotaxis proteins or MCP) by CheR. Also mediates the irreversible deamidation of specific glutamine residues to glutamic acid. This Caldanaerobacter subterraneus subsp. tengcongensis (strain DSM 15242 / JCM 11007 / NBRC 100824 / MB4) (Thermoanaerobacter tengcongensis) protein is Protein-glutamate methylesterase/protein-glutamine glutaminase.